The chain runs to 129 residues: NADH-quinone oxidoreductase subunit K 2 (129 aa).

A run of 3 helical transmembrane segments spans residues 3 to 23 (LAYP…GVLA), 28 to 48 (ILVL…LVAF), and 68 to 88 (LFTI…VLAV). Residues 98 to 129 (DKLRDTAEGPEPDGPGTDGSAPTAAEKAEATA) form a disordered region. Low complexity predominate over residues 111–122 (GPGTDGSAPTAA).

The protein belongs to the complex I subunit 4L family. In terms of assembly, NDH-1 is composed of 14 different subunits. Subunits NuoA, H, J, K, L, M, N constitute the membrane sector of the complex.

It localises to the cell membrane. The catalysed reaction is a quinone + NADH + 5 H(+)(in) = a quinol + NAD(+) + 4 H(+)(out). NDH-1 shuttles electrons from NADH, via FMN and iron-sulfur (Fe-S) centers, to quinones in the respiratory chain. The immediate electron acceptor for the enzyme in this species is believed to be a menaquinone. Couples the redox reaction to proton translocation (for every two electrons transferred, four hydrogen ions are translocated across the cytoplasmic membrane), and thus conserves the redox energy in a proton gradient. The polypeptide is NADH-quinone oxidoreductase subunit K 2 (Streptomyces avermitilis (strain ATCC 31267 / DSM 46492 / JCM 5070 / NBRC 14893 / NCIMB 12804 / NRRL 8165 / MA-4680)).